Reading from the N-terminus, the 110-residue chain is Cysteine-rich and transmembrane domain-containing protein 1 (110 aa).

Residues 1–18 (MNYENPPPYASPPAPYPP) show a composition bias toward pro residues. A disordered region spans residues 1–45 (MNYENPPPYASPPAPYPPYGQQQPSYPVPNQYPGNPPGPVGYQPA). Residues 19 to 29 (YGQQQPSYPVP) are compositionally biased toward low complexity. The chain crosses the membrane as a helical span at residues 87–104 (SGESACLTACWTALCCCC).

Belongs to the CYSTM1 family.

It is found in the membrane. The polypeptide is Cysteine-rich and transmembrane domain-containing protein 1 (cystm1) (Xenopus tropicalis (Western clawed frog)).